We begin with the raw amino-acid sequence, 244 residues long: Cell adhesion molecule CEACAM4 (244 aa).

Positions 1–35 (MGPPSAAPRGGHRPWQGLLITASLLTFWHPPTTVQ) are cleaved as a signal peptide. Positions 36-139 (FTIEALPSSA…DSDQATGQLH (104 aa)) constitute an Ig-like V-type domain. Residues 36–155 (FTIEALPSSA…PGLPVGAVAG (120 aa)) lie on the Extracellular side of the membrane. 4 N-linked (GlcNAc...) asparagine glycosylation sites follow: Asn-57, Asn-104, Asn-111, and Asn-126. A helical transmembrane segment spans residues 156-176 (IVTGVLVGVALVAALVCFLLL). The Cytoplasmic portion of the chain corresponds to 177–244 (SRTGRASIQR…QIDHKADVVS (68 aa)). Positions 186-215 (RDLREQPPPASTPGHGPSHRSTFSAPLPSP) are disordered. Positions 222–236 (YEELLYSDANIYCQI) match the ITAM motif.

It belongs to the immunoglobulin superfamily. CEA family. As to quaternary structure, interacts through its phosphorylated ITAM domain with the SH2 domain-containing cytoplasmic proteins involved in signaling processes during phagocytosis. N-glycosylated. Post-translationally, the cytoplasmic ITAM-like sequence becomes tyrosine phosphorylated by SRC family PTKs upon ligand-mediated receptor clustering and allows to initiate phagocytosis of bound ligand. In terms of tissue distribution, granulocytes.

The protein resides in the membrane. Functionally, granulocyte orphan receptor that acts as an trigger efficient phagocytosis of attached particles. The protein is Cell adhesion molecule CEACAM4 of Homo sapiens (Human).